Here is a 474-residue protein sequence, read N- to C-terminus: GTPase Der (474 aa).

2 consecutive EngA-type G domains span residues 2 to 166 (LRIA…NVPE) and 212 to 385 (LKIA…ETVS). Residues 8–15 (GRPNVGKS), 55–59 (DTGGV), 118–121 (NKAD), 218–225 (GRPNVGKS), 265–269 (DTAGL), and 330–333 (NKWD) contribute to the GTP site. The KH-like domain maps to 386–470 (SKVPTPVVNK…PFDLEFKEKT (85 aa)).

It belongs to the TRAFAC class TrmE-Era-EngA-EngB-Septin-like GTPase superfamily. EngA (Der) GTPase family. Associates with the 50S ribosomal subunit.

Functionally, GTPase that plays an essential role in the late steps of ribosome biogenesis. The sequence is that of GTPase Der from Chlamydia caviae (strain ATCC VR-813 / DSM 19441 / 03DC25 / GPIC) (Chlamydophila caviae).